The chain runs to 1271 residues: Diacylglycerol kinase kappa (1271 aa).

The segment covering 1 to 15 (MDRGAAAAQGTAPPQ) has biased composition (low complexity). The segment at 1–160 (MDRGAAAAQG…PEPTPEPVTE (160 aa)) is disordered. Pro residues predominate over residues 23 to 44 (SPEPPPPWPPPPPPPAPPPAPP). Repeat copies occupy residues 48–51 (EASP), 52–55 (EPIP), 56–59 (EPCP), 60–63 (ELAP), 64–67 (GPCP), 68–71 (EATS), 72–75 (ESAT), 76–79 (ELYT), 80–83 (EPTP), 84–87 (EPAT), 88–91 (EPAS), 92–95 (EPAP), 96–99 (EPAT), 100–103 (EPAP), 104–107 (EPAT), 108–111 (EPAP), 112–115 (EPAP), 116–119 (EPAT), 120–123 (ESAP), 124–127 (EPTP), 128–131 (EPAL), 132–135 (ESVP), 136–139 (EPAP), 140–143 (ELTP), 144–147 (EVAP), 148–151 (ELAP), 152–155 (EPTP), 156–159 (EPVT), 160–163 (ELAP), 164–167 (EFCP), 168–171 (EAAP), 172–175 (EFRP), and 176–179 (SPAP). The tract at residues 48 to 179 (EASPEPIPEP…APEFRPSPAP (132 aa)) is 33 X 4 AA approximate tandem repeats of E-P-A-P. The span at 52-66 (EPIPEPCPELAPGPC) shows a compositional bias: pro residues. Tyr78 is modified (phosphotyrosine). A compositionally biased stretch (pro residues) spans 82–116 (TPEPATEPASEPAPEPATEPAPEPATEPAPEPAPE). The segment covering 139 to 149 (PELTPEVAPEL) has biased composition (low complexity). Residues 190 to 209 (ERGLKTSPSPSPSPSPRTPM) form a disordered region. Residues 216–309 (KILKEGPMLK…WINIIKTIQQ (94 aa)) form the PH domain. 2 Phorbol-ester/DAG-type zinc fingers span residues 327-377 (MHCW…SKDC) and 398-449 (PHQW…SKEC). The region spanning 487-622 (ACSCPLLIFI…LDRWSVMIRE (136 aa)) is the DAGKc domain. Disordered regions lie at residues 805 to 825 (DDPEDINQTSPRRRSRRGTLS) and 1252 to 1271 (RHREDEAEGDDPLTPSRSQL). Residues 1199 to 1268 (PIFVPEEKSS…EGDDPLTPSR (70 aa)) are required for localization to the plasma membrane.

This sequence belongs to the eukaryotic diacylglycerol kinase family. In terms of assembly, does not form homooligomers. Phosphorylated at Tyr-78 by some member of the SRC family in response to H(2)O(2). In terms of tissue distribution, expressed in testis, and to a lesser extent in placenta.

It is found in the cell membrane. The catalysed reaction is a 1,2-diacyl-sn-glycerol + ATP = a 1,2-diacyl-sn-glycero-3-phosphate + ADP + H(+). It catalyses the reaction 1,2-di-(9Z-octadecenoyl)-sn-glycerol + ATP = 1,2-di-(9Z-octadecenoyl)-sn-glycero-3-phosphate + ADP + H(+). Its pathway is lipid metabolism; glycerolipid metabolism. Inhibited in response to H(2)O(2). In terms of biological role, diacylglycerol kinase that converts diacylglycerol/DAG into phosphatidic acid/phosphatidate/PA and regulates the respective levels of these two bioactive lipids. Thereby, acts as a central switch between the signaling pathways activated by these second messengers with different cellular targets and opposite effects in numerous biological processes. This chain is Diacylglycerol kinase kappa, found in Homo sapiens (Human).